The primary structure comprises 294 residues: Non-selective voltage-gated ion channel VDAC2 (294 aa).

A2 carries the post-translational modification N-acetylalanine. ATP contacts are provided by K23 and K31. K31 is modified (N6-acetyllysine; alternate). K31 carries the N6-succinyllysine; alternate modification. A Glycyl lysine isopeptide (Lys-Gly) (interchain with G-Cter in ubiquitin); alternate cross-link involves residue K31. 2 consecutive transmembrane segments (beta stranded) span residues 37–46 (LVKLDVKTKS) and 50–58 (VEFSTSGSS). Residues K64 and K72 each participate in a glycyl lysine isopeptide (Lys-Gly) (interchain with G-Cter in ubiquitin) cross-link. The chain crosses the membrane as a beta stranded span at residues 65–75 (VTGTLETKYKW). Position 78 is a phosphotyrosine (Y78). Beta stranded transmembrane passes span 80–87 (LTFTEKWN), 91–100 (TLGTEIAIED), and 106–115 (LKLTFDTTFS). At T118 the chain carries Phosphothreonine. K120 carries the N6-acetyllysine; alternate modification. A Glycyl lysine isopeptide (Lys-Gly) (interchain with G-Cter in ubiquitin); alternate cross-link involves residue K120. Glycyl lysine isopeptide (Lys-Gly) (interchain with G-Cter in ubiquitin) cross-links involve residues K121 and K124. Beta stranded transmembrane passes span 122-131 (SGKIKSSYKR), 134-141 (INLGCDVD), 148-156 (AIHGSAVFG), and 161-169 (LAGYQMTFD). A Glycyl lysine isopeptide (Lys-Gly) (interchain with G-Cter in ubiquitin) cross-link involves residue K172. The next 6 beta stranded transmembrane spans lie at 174-186 (KLTR…GYRT), 189-196 (FQLHTNVN), 200-209 (EFGGSIYQKV), 213-222 (LDTSVNLAWT), 229-238 (RFGIAAKYQL), and 242-249 (ASISAKVN). S251 is modified (phosphoserine). NAD(+) is bound by residues 253-255 (LIG) and 271-275 (SALVD). The next 2 beta stranded transmembrane spans lie at 253-262 (LIGVGYTQTL) and 265-274 (GVKLTLSALV). N6-acetyllysine; alternate is present on K277. K277 is covalently cross-linked (Glycyl lysine isopeptide (Lys-Gly) (interchain with G-Cter in ubiquitin); alternate). A beta stranded transmembrane segment spans residues 284–293 (HKVGLALELE). K285 participates in a covalent cross-link: Glycyl lysine isopeptide (Lys-Gly) (interchain with G-Cter in ubiquitin).

Belongs to the eukaryotic mitochondrial porin family. Monomer, homodimer and higher order oligomers; formation of higher order structures is necessary for scramblase activity. Interacts with ARMC12 in a TBC1D21-dependent manner. Interacts with KLC3. Interacts with SPATA33. Interacts with PPP3CC in a SPATA33-dependent manner. Ubiquitinated by PRKN during mitophagy, leading to its degradation and enhancement of mitophagy. Deubiquitinated by USP30. As to expression, expressed in erythrocytes (at protein level). Expressed in all tissues examined.

The protein localises to the mitochondrion outer membrane. Its subcellular location is the membrane. It carries out the reaction chloride(in) = chloride(out). The catalysed reaction is K(+)(in) = K(+)(out). The enzyme catalyses a 1,2-diacyl-sn-glycero-3-phospho-L-serine(in) = a 1,2-diacyl-sn-glycero-3-phospho-L-serine(out). It catalyses the reaction a 1,2-diacyl-sn-glycero-3-phosphocholine(in) = a 1,2-diacyl-sn-glycero-3-phosphocholine(out). It carries out the reaction a 1,2-diacyl-sn-glycero-3-phospho-(1D-myo-inositol)(in) = a 1,2-diacyl-sn-glycero-3-phospho-(1D-myo-inositol)(out). Functionally, non-selective voltage-gated ion channel that mediates the transport of anions and cations through the mitochondrion outer membrane and plasma membrane. The channel adopts an open conformation at zero mV and a closed conformation at both positive and negative potentials. There are two populations of channels; the main that functions in a lower open-state conductance with lower ion selectivity, that switch, in a voltage-dependent manner, from the open to a low-conducting 'closed' state and the other that has a normal ion selectivity in the typical high conductance, 'open' state. Binds various lipids, including the sphingolipid ceramide, the phospholipid phosphatidylcholine, and the sterols cholesterol and oxysterol. Binding of ceramide promotes the mitochondrial outer membrane permeabilization (MOMP) apoptotic pathway. Its function is as follows. Catalyzes the scrambling of phospholipids across the outer mitochondrial membrane; the mechanism is unrelated to channel activity and is capable of translocating both anionic and zwitterionic phospholipids. The protein is Non-selective voltage-gated ion channel VDAC2 of Homo sapiens (Human).